A 137-amino-acid chain; its full sequence is Small ribosomal subunit protein uS12 (137 aa).

Disordered regions lie at residues 1–21 (MPTINQLVRKPRKSKIEKSDS) and 34–57 (VHTKLAAPQKRGVATRVGTMTPKK). At D102 the chain carries 3-methylthioaspartic acid.

This sequence belongs to the universal ribosomal protein uS12 family. In terms of assembly, part of the 30S ribosomal subunit. Contacts proteins S8 and S17. May interact with IF1 in the 30S initiation complex.

In terms of biological role, with S4 and S5 plays an important role in translational accuracy. Functionally, interacts with and stabilizes bases of the 16S rRNA that are involved in tRNA selection in the A site and with the mRNA backbone. Located at the interface of the 30S and 50S subunits, it traverses the body of the 30S subunit contacting proteins on the other side and probably holding the rRNA structure together. The combined cluster of proteins S8, S12 and S17 appears to hold together the shoulder and platform of the 30S subunit. The protein is Small ribosomal subunit protein uS12 of Streptococcus equi subsp. zooepidemicus (strain H70).